The chain runs to 365 residues: MEIKWLHLKSFRNYQDQEVDFRPGLTILQGENGQGKTNILEGIYYLLTGKSYRVHREQELARWGENEFHLYGDFIVQRRKLRLESHYQDKRKIIKINQIPCRKLSEYVGTINVVFFSPDDLVMVKGGPAERRRFLDLHIAQHHSKHIQLLNAYNKVLQQKNALLKQGQGGSKSQIAQIELWNEQILRIGSEIIRNRWEFTGLLSRKGQEIYGQISSGKEELTMDYHALGKNNLEEALAAFPKLLAEKMSLEMERKMVLIGPHRDDILFKLNERSARLYGSQGQQRSIVLSTKLAELEVIRQEKGDYPLLLLDDVLSELDRFRRDYLLDYTKSLQQTIMTMTSAETLTQRASLLLKVEKGQIGRIE.

ATP is bound at residue 30 to 37 (GENGQGKT).

This sequence belongs to the RecF family.

The protein localises to the cytoplasm. Its function is as follows. The RecF protein is involved in DNA metabolism; it is required for DNA replication and normal SOS inducibility. RecF binds preferentially to single-stranded, linear DNA. It also seems to bind ATP. This Desulfitobacterium hafniense (strain DSM 10664 / DCB-2) protein is DNA replication and repair protein RecF.